Reading from the N-terminus, the 529-residue chain is Phosphoenolpyruvate carboxykinase (ATP) (529 aa).

Substrate is bound at residue Arg52. The Ca(2+) site is built by Arg130, Asn131, and Phe133. Residues Tyr191 and Lys197 each contribute to the substrate site. Residues Lys197, His216, and 232-240 contribute to the ATP site; that span reads GLSGTGKTT. Lys197 and His216 together coordinate Mn(2+). Asp253 contributes to the Mn(2+) binding site. Gly267 contributes to the Ca(2+) binding site. Residues Glu281, Arg319, 438 to 439, Phe439, and Thr444 contribute to the ATP site; that span reads RF. Arg319 lines the substrate pocket.

This sequence belongs to the phosphoenolpyruvate carboxykinase (ATP) family. Dimer of dimers. It depends on Mn(2+) as a cofactor.

Its subcellular location is the cytoplasm. It catalyses the reaction oxaloacetate + ATP = phosphoenolpyruvate + ADP + CO2. The protein operates within carbohydrate biosynthesis; gluconeogenesis. Allosterically activated by calcium. Its function is as follows. Involved in gluconeogenesis. Catalyzes the conversion of oxaloacetate (OAA) to phosphoenolpyruvate (PEP) through direct phosphoryl transfer between the nucleoside triphosphate and OAA. This Thermus thermophilus (strain ATCC 27634 / DSM 579 / HB8) protein is Phosphoenolpyruvate carboxykinase (ATP).